We begin with the raw amino-acid sequence, 437 residues long: Magnetosome protein MamN (437 aa).

11 consecutive transmembrane segments (helical) span residues 26-46 (LAVL…GTYT), 53-73 (SIYF…ALLA), 95-115 (WILV…NSLI), 136-156 (VPVI…TMIG), 174-194 (FIGG…LFFE), 229-249 (YGLI…PLKV), 252-268 (GWIA…LGRF), 281-301 (DILF…VGIL), 320-340 (AILL…GTSA), 358-378 (AAWW…LSGA), and 416-436 (WGLP…AVLA).

It belongs to the arsenite-antimonite (ArsB) efflux (TC 2.A.45) family.

Its subcellular location is the magnetosome membrane. In terms of biological role, plays a role in biomineralization; might regulate pH in the magnetosome. The chain is Magnetosome protein MamN from Magnetospirillum gryphiswaldense (strain DSM 6361 / JCM 21280 / NBRC 15271 / MSR-1).